The chain runs to 365 residues: MDFSSSNGSEDTELSQAQIHLYKHVYNFVSSMALKSAMELGIADVIHSHGKPITLPELATALNLRPSKIGVLHRFLRLLTHNGFFAKTTVSRGEGAEEETAYGLTPPSKLLVKSNSTCLAPIVKGALHPSSLDMWRSSKKWFLEDNEELTLFESATGESFWEFLNKETESDTLSMFQEAMAADSHMFKLALKECKHVFEGLGSLVDVAGGRGGVTKLIREAFPHVKCTVFDQPQVVANLTGDENLNFVGGDMFKSVPPADAVLLKWVLHDWNDELSLKILKNCKEAISGRGKEGKVIIIDISIDETSDDRELTELKLDYDLVMLTMFNGKEREKKEWEKLIYDAGFSSYKITPICGFKSLIEVFP.

S-adenosyl-L-methionine contacts are provided by residues 207–210 (VAGG), Asp231, 231–232 (DQ), 251–252 (DM), and Lys265. His269 functions as the Proton acceptor in the catalytic mechanism.

It belongs to the class I-like SAM-binding methyltransferase superfamily. Cation-independent O-methyltransferase family. COMT subfamily.

The catalysed reaction is a 4'-hydroxyisoflavone + S-adenosyl-L-methionine = a 4'-methoxyisoflavone + S-adenosyl-L-homocysteine + H(+). The enzyme catalyses (2R,3S)-2,4',7-trihydroxyisoflavanone + S-adenosyl-L-methionine = (2R,3S)-2,7-dihydroxy-4'-methoxyisoflavanone + S-adenosyl-L-homocysteine + H(+). In terms of biological role, 2-hydroxyisoflavanone 4'-O-methyltransferase involved in the biosynthesis of formononetin. Can use 2,7,4'-trihydroxyisoflavanone as substrate, but not daidzein. In Lotus japonicus (Lotus corniculatus var. japonicus), this protein is Isoflavone 4'-O-methyltransferase (HI4'OMT).